The chain runs to 863 residues: DNA-directed RNA polymerase subunit beta' (863 aa).

The disordered stretch occupies residues 1 to 83; sequence MSGEVAQDQP…SKKKETKASQ (83 aa). Polar residues predominate over residues 23 to 36; that stretch reads EIVNSAITVQSSAK. Positions 159, 161, 180, and 183 each coordinate Zn(2+). 3 residues coordinate Mg(2+): Asp621, Asp623, and Asp625.

This sequence belongs to the RNA polymerase beta' chain family. RpoC1 subfamily. As to quaternary structure, in plastids the minimal PEP RNA polymerase catalytic core is composed of four subunits: alpha, beta, beta', and beta''. When a (nuclear-encoded) sigma factor is associated with the core the holoenzyme is formed, which can initiate transcription. It depends on Mg(2+) as a cofactor. Zn(2+) is required as a cofactor.

The protein resides in the plastid. It is found in the chloroplast. The catalysed reaction is RNA(n) + a ribonucleoside 5'-triphosphate = RNA(n+1) + diphosphate. Its function is as follows. DNA-dependent RNA polymerase catalyzes the transcription of DNA into RNA using the four ribonucleoside triphosphates as substrates. This Nephroselmis olivacea (Green alga) protein is DNA-directed RNA polymerase subunit beta'.